Here is a 725-residue protein sequence, read N- to C-terminus: G-quartet DNA-binding protein TGP1 (725 aa).

The Nuclear localization signal signature appears at K241–H258. Disordered regions lie at residues E252–T284 and E468–G614. The span at R256–Q277 shows a compositional bias: basic residues. Residues E468–R478 show a composition bias toward basic and acidic residues. Residues N517–P544 show a composition bias toward low complexity. The span at R545–N564 shows a compositional bias: basic and acidic residues. Positions N565–N593 are enriched in low complexity.

Post-translationally, the N-terminus is blocked.

It is found in the nucleus. Binds specifically to parallel G4-DNA, a four-stranded structure stabilized by tetrads of hydrogen-bonded guanines. The chain is G-quartet DNA-binding protein TGP1 (TGP1) from Tetrahymena thermophila.